The sequence spans 130 residues: Large ribosomal subunit protein bL19c (130 aa).

It belongs to the bacterial ribosomal protein bL19 family.

The protein localises to the plastid. The protein resides in the chloroplast. This Chlorella vulgaris (Green alga) protein is Large ribosomal subunit protein bL19c (rpl19).